Here is a 497-residue protein sequence, read N- to C-terminus: Putative aldehyde dehydrogenase AldA (497 aa).

213 to 219 (GKGSESG) provides a ligand contact to NAD(+). Catalysis depends on residues Glu257 and Cys291.

The protein belongs to the aldehyde dehydrogenase family.

The catalysed reaction is an aldehyde + NAD(+) + H2O = a carboxylate + NADH + 2 H(+). The sequence is that of Putative aldehyde dehydrogenase AldA (aldA) from Staphylococcus epidermidis (strain ATCC 35984 / DSM 28319 / BCRC 17069 / CCUG 31568 / BM 3577 / RP62A).